Consider the following 470-residue polypeptide: Glycine--tRNA ligase (470 aa).

Residues arginine 94 and glutamate 183 each coordinate substrate. ATP contacts are provided by residues 215–217, 225–230, 298–299, and 342–345; these read RNE, FRMVEF, EI, and GCDR. 230-234 lines the substrate pocket; the sequence is FEQME. 338 to 342 is a binding site for substrate; sequence ETSSG.

Belongs to the class-II aminoacyl-tRNA synthetase family. Homodimer.

The protein resides in the cytoplasm. It catalyses the reaction tRNA(Gly) + glycine + ATP = glycyl-tRNA(Gly) + AMP + diphosphate. In terms of biological role, catalyzes the attachment of glycine to tRNA(Gly). In Chlorobaculum tepidum (strain ATCC 49652 / DSM 12025 / NBRC 103806 / TLS) (Chlorobium tepidum), this protein is Glycine--tRNA ligase.